Reading from the N-terminus, the 371-residue chain is 3-isopropylmalate dehydrogenase B (371 aa).

Residue 79–93 participates in NAD(+) binding; sequence GSKVDHIRRGLDGPE. R100, R110, R142, and D229 together coordinate substrate. Residues D229, D254, and D258 each contribute to the Mg(2+) site. Residue 296–308 coordinates NAD(+); the sequence is GSAPTIAGKNIAN.

It belongs to the isocitrate and isopropylmalate dehydrogenases family. In terms of assembly, homodimer. Mg(2+) is required as a cofactor. It depends on Mn(2+) as a cofactor.

The protein localises to the cytoplasm. The catalysed reaction is (2R,3S)-3-isopropylmalate + NAD(+) = 4-methyl-2-oxopentanoate + CO2 + NADH. Its pathway is amino-acid biosynthesis; L-leucine biosynthesis; L-leucine from 3-methyl-2-oxobutanoate: step 3/4. In terms of biological role, catalyzes the oxidation of 3-carboxy-2-hydroxy-4-methylpentanoate (3-isopropylmalate) to 3-carboxy-4-methyl-2-oxopentanoate. The product decarboxylates to 4-methyl-2 oxopentanoate. The polypeptide is 3-isopropylmalate dehydrogenase B (leu2B) (Aspergillus niger).